A 524-amino-acid chain; its full sequence is Nif-specific regulatory protein (524 aa).

The tract at residues 1-182 (MIHKSDSDTT…AQTIRLMILP (182 aa)) is a domain. The GAF domain maps to 35-176 (EASKTLQEVL…TVANLIAQTI (142 aa)). The 270-residue stretch at 212–481 (MVGKSPAMRQ…DGWLDNSLDE (270 aa)) folds into the Sigma-54 factor interaction domain. Residues 240–247 (GESGTGKE) and 303–312 (ADGGTLFLDE) contribute to the ATP site. The interval 482-524 (RQRLIAALEKAGWVQAKAARLLGMTPRQVAYRIQIMDITMPRL) is C-terminal DNA-binding domain. The segment at residues 496–515 (QAKAARLLGMTPRQVAYRIQ) is a DNA-binding region (H-T-H motif).

As to quaternary structure, interacts with sigma-54.

Functionally, required for activation of most nif operons, which are directly involved in nitrogen fixation. The protein is Nif-specific regulatory protein (nifA) of Klebsiella pneumoniae.